Reading from the N-terminus, the 68-residue chain is Long neurotoxin 1 (68 aa).

Disulfide bonds link Cys-3/Cys-20, Cys-13/Cys-41, Cys-26/Cys-30, Cys-45/Cys-56, and Cys-57/Cys-62.

This sequence belongs to the three-finger toxin family. Long-chain subfamily. Type II alpha-neurotoxin sub-subfamily. As to expression, expressed by the venom gland.

The protein resides in the secreted. Binds with high affinity to muscular (alpha-1/CHRNA1) and neuronal (alpha-7/CHRNA7) nicotinic acetylcholine receptor (nAChR) and inhibits acetylcholine from binding to the receptor, thereby impairing neuromuscular and neuronal transmission. The protein is Long neurotoxin 1 of Aspidelaps scutatus (Shield-nose snake).